A 394-amino-acid chain; its full sequence is Protein DDI1 homolog 2 (394 aa).

The Ubiquitin-like domain occupies 1–81 (MLITVYCVRR…VILRQRETPE (81 aa)). The disordered stretch occupies residues 82 to 128 (ARPAAPFPGLDFSTIAVPGSSSQPAPSQPQAPPPPPPDTSSFPQGLD). The segment covering 107-119 (PSQPQAPPPPPPD) has biased composition (pro residues). Asp247 is a catalytic residue. Residues 371-390 (EEIADRELAEVLQKSAEEAD) carry the Ubiquitin-binding motif.

It belongs to the DDI1 family. As to quaternary structure, homodimer.

It is found in the cytoplasm. The protein localises to the cytosol. The protein resides in the chromosome. Functionally, aspartic protease that mediates the cleavage of NFE2L1/NRF1 at 'Leu-104', thereby promoting release of NFE2L1/NRF1 from the endoplasmic reticulum membrane. Ubiquitination of NFE2L1/NRF1 is a prerequisite for cleavage, suggesting that DDI2 specifically recognizes and binds ubiquitinated NFE2L1/NRF1. Seems to act as a proteasomal shuttle which links the proteasome and replication fork proteins like RTF2. Required for cellular survival following replication stress. This is Protein DDI1 homolog 2 (ddi2) from Xenopus tropicalis (Western clawed frog).